A 156-amino-acid chain; its full sequence is ATP synthase subunit b (156 aa).

The helical transmembrane segment at 11-31 (AIAFILFVWFCMKYVWPPLMA) threads the bilayer.

The protein belongs to the ATPase B chain family. As to quaternary structure, F-type ATPases have 2 components, F(1) - the catalytic core - and F(0) - the membrane proton channel. F(1) has five subunits: alpha(3), beta(3), gamma(1), delta(1), epsilon(1). F(0) has three main subunits: a(1), b(2) and c(10-14). The alpha and beta chains form an alternating ring which encloses part of the gamma chain. F(1) is attached to F(0) by a central stalk formed by the gamma and epsilon chains, while a peripheral stalk is formed by the delta and b chains.

Its subcellular location is the cell inner membrane. Functionally, f(1)F(0) ATP synthase produces ATP from ADP in the presence of a proton or sodium gradient. F-type ATPases consist of two structural domains, F(1) containing the extramembraneous catalytic core and F(0) containing the membrane proton channel, linked together by a central stalk and a peripheral stalk. During catalysis, ATP synthesis in the catalytic domain of F(1) is coupled via a rotary mechanism of the central stalk subunits to proton translocation. In terms of biological role, component of the F(0) channel, it forms part of the peripheral stalk, linking F(1) to F(0). This chain is ATP synthase subunit b, found in Salmonella gallinarum (strain 287/91 / NCTC 13346).